The chain runs to 399 residues: Succinate--CoA ligase [ADP-forming] subunit beta (399 aa).

In terms of domain architecture, ATP-grasp spans 9 to 254 (KAVLAEFGAP…ESEEDPKEIE (246 aa)). ATP-binding positions include Lys46, 53 to 55 (GRG), Glu109, Ala112, and Glu117. Mg(2+)-binding residues include Asn209 and Asp223. Substrate-binding positions include Asn274 and 331–333 (GIM).

Belongs to the succinate/malate CoA ligase beta subunit family. In terms of assembly, heterotetramer of two alpha and two beta subunits. Requires Mg(2+) as cofactor.

It catalyses the reaction succinate + ATP + CoA = succinyl-CoA + ADP + phosphate. The catalysed reaction is GTP + succinate + CoA = succinyl-CoA + GDP + phosphate. It participates in carbohydrate metabolism; tricarboxylic acid cycle; succinate from succinyl-CoA (ligase route): step 1/1. Its function is as follows. Succinyl-CoA synthetase functions in the citric acid cycle (TCA), coupling the hydrolysis of succinyl-CoA to the synthesis of either ATP or GTP and thus represents the only step of substrate-level phosphorylation in the TCA. The beta subunit provides nucleotide specificity of the enzyme and binds the substrate succinate, while the binding sites for coenzyme A and phosphate are found in the alpha subunit. This Caulobacter sp. (strain K31) protein is Succinate--CoA ligase [ADP-forming] subunit beta.